A 761-amino-acid polypeptide reads, in one-letter code: Probable ubiquitin carboxyl-terminal hydrolase creB (761 aa).

Residues 1 to 45 (MGSFLRSFRHNGGSTAPSVGAVPAKKEPQPPPMTPLEKRLLDMGP) are disordered. Residues 36–45 (LEKRLLDMGP) show a composition bias toward basic and acidic residues. One can recognise a USP domain in the interval 55-468 (YGMENYGNTC…CAYVLFYQET (414 aa)). The active-site Nucleophile is the C64. 2 disordered regions span residues 113–146 (EAEA…DSPE) and 242–269 (PLME…KTPN). Residues 256 to 269 (SVDQSSSTGSKTPN) show a composition bias toward polar residues. H419 functions as the Proton acceptor in the catalytic mechanism. A disordered region spans residues 496-761 (LKQNGFPQSP…LRKKSFSILS (266 aa)). Positions 555-566 (PLSPVPPVPPIP) are enriched in pro residues. Residues 577-640 (KNDALAKREE…ASKAEEDRRL (64 aa)) adopt a coiled-coil conformation. The segment covering 580–649 (ALAKREEKER…LSTENGKEKQ (70 aa)) has biased composition (basic and acidic residues). Residues 655–666 (RLKRGSKSLSHR) are compositionally biased toward basic residues. Residues 692–710 (SQSGPTSEQQQQQRQQSPP) are compositionally biased toward low complexity. Pro residues predominate over residues 712 to 722 (HDQPPNSPQPG). A compositionally biased stretch (basic and acidic residues) spans 725–743 (TIREDEQVNHKDSKHERTG). Positions 744–761 (HGKWRSFSLRKKSFSILS) are enriched in basic residues.

The protein belongs to the peptidase C19 family. Interacts with creA, creC and qutD.

It carries out the reaction Thiol-dependent hydrolysis of ester, thioester, amide, peptide and isopeptide bonds formed by the C-terminal Gly of ubiquitin (a 76-residue protein attached to proteins as an intracellular targeting signal).. Functionally, ubiquitin thioesterase component of the regulatory network controlling carbon source utilization through ubiquitination and deubiquitination involving creA, creB, creC, creD and acrB. Deubiquitinates the creA catabolic repressor and the quinate permease qutD. Also plays a role in response to carbon starvation and the control of extracellular proteases activity. This chain is Probable ubiquitin carboxyl-terminal hydrolase creB (creB), found in Neosartorya fischeri (strain ATCC 1020 / DSM 3700 / CBS 544.65 / FGSC A1164 / JCM 1740 / NRRL 181 / WB 181) (Aspergillus fischerianus).